The sequence spans 286 residues: Oxidase hkm6 (286 aa).

3 residues coordinate Cu cation: His16, His25, and His215.

It belongs to the tyrosinase family. Cu(2+) is required as a cofactor.

The protein operates within secondary metabolite biosynthesis. Functionally, oxidase; part of the gene cluster that mediates the biosynthesis of hancockiamides, an unusual new family of N-cinnamoylated piperazines. The NRPS hkm10 and the NmrA-like reductase hkm9 are proposed to convert two molecules of L-Phe to the intermediary piperazine called xenocockiamide A. Xenocockiamide A is then converted to hancockiamide D via a series of hydroxylations and O-methylations. The tyrosinase hkm6 may catalyze an aromatic hydroxylation, then the 2-oxoglutarate-dependent Fe(II) dioxygenase hkm4 and the FAD-dependent phenol hydroxylase hkm7 may catalyze consecutive hydroxylations to install 2 more hydroxy groups, and the methyltransferase hkm8 probably catalyzes two methylations using 2 molecules of S-adenosyl-L-methionine (SAM). The NRPS hkm11 activates and transfers trans-cinnamate supplied by the PAL hkm12 to hancockiamide D and produces hancockiamide A. NRPS Hkm11 has the flexibility to tolerate the bulky hancockiamide G as a substrate and the absence of the acetyl-transferase hkm3 opens up the opportunity for hkm11 to introduce a second N-cinnamoyl moiety. The cytochrome P450 monooxygenase hkm5 catalyzes the methylenedioxy bridge formation, converting hancockiamide A into hancockiamide G. Hkm5 can also convert hancockiamide B into hancockiamide C, and hancockiamide D into hancockiamide H. The N-acetyltransferase hkm3 finally transfers an acetyl group to 1-N of piperazine, converting hancockiamide A into hancockiamide B and hancockiamide G into hancockiamide C. In Aspergillus hancockii, this protein is Oxidase hkm6.